The primary structure comprises 238 residues: uncharacterized protein (238 aa).

Disordered stretches follow at residues 1–51 (MPCT…ASCA) and 214–238 (ITVEPAGGSAEPTSDPVALMNFPTA). Over residues 16-31 (ATWRTARPAPRRCGSC) the composition is skewed to low complexity.

This is an uncharacterized protein from Streptomyces griseus.